The chain runs to 235 residues: Ribitol-5-phosphate cytidylyltransferase (235 aa).

CTP-binding positions include 7-10 (LAGG), 82-88 (GADRNTS), and Ser-113.

It belongs to the IspD/TarI cytidylyltransferase family. TarI subfamily.

The catalysed reaction is D-ribitol 5-phosphate + CTP + H(+) = CDP-L-ribitol + diphosphate. It participates in cell wall biogenesis; poly(ribitol phosphate) teichoic acid biosynthesis. Its function is as follows. Catalyzes the transfer of the cytidylyl group of CTP to D-ribitol 5-phosphate. The sequence is that of Ribitol-5-phosphate cytidylyltransferase from Streptococcus pneumoniae (strain ATCC 700669 / Spain 23F-1).